An 83-amino-acid chain; its full sequence is Apolipoprotein C-I, acidic form (83 aa).

A signal peptide spans 1–26; sequence MRLFLSLPVLVVVLSIVLEGPAPAQG.

Belongs to the apolipoprotein C1 family.

It is found in the secreted. This chain is Apolipoprotein C-I, acidic form (APOC1A), found in Pan paniscus (Pygmy chimpanzee).